The chain runs to 462 residues: ATP-dependent protease ATPase subunit HslU (462 aa).

ATP contacts are provided by residues Ile-21, Gly-63–Glu-68, Asp-275, Glu-340, and Arg-412.

It belongs to the ClpX chaperone family. HslU subfamily. As to quaternary structure, a double ring-shaped homohexamer of HslV is capped on each side by a ring-shaped HslU homohexamer. The assembly of the HslU/HslV complex is dependent on binding of ATP.

The protein localises to the cytoplasm. Functionally, ATPase subunit of a proteasome-like degradation complex; this subunit has chaperone activity. The binding of ATP and its subsequent hydrolysis by HslU are essential for unfolding of protein substrates subsequently hydrolyzed by HslV. HslU recognizes the N-terminal part of its protein substrates and unfolds these before they are guided to HslV for hydrolysis. This Pseudothermotoga lettingae (strain ATCC BAA-301 / DSM 14385 / NBRC 107922 / TMO) (Thermotoga lettingae) protein is ATP-dependent protease ATPase subunit HslU.